The primary structure comprises 343 residues: S-adenosylmethionine:tRNA ribosyltransferase-isomerase (343 aa).

It belongs to the QueA family. Monomer.

It is found in the cytoplasm. The enzyme catalyses 7-aminomethyl-7-carbaguanosine(34) in tRNA + S-adenosyl-L-methionine = epoxyqueuosine(34) in tRNA + adenine + L-methionine + 2 H(+). The protein operates within tRNA modification; tRNA-queuosine biosynthesis. In terms of biological role, transfers and isomerizes the ribose moiety from AdoMet to the 7-aminomethyl group of 7-deazaguanine (preQ1-tRNA) to give epoxyqueuosine (oQ-tRNA). This is S-adenosylmethionine:tRNA ribosyltransferase-isomerase from Geobacter sulfurreducens (strain ATCC 51573 / DSM 12127 / PCA).